Here is a 246-residue protein sequence, read N- to C-terminus: 5-oxoprolinase subunit A (246 aa).

The protein belongs to the LamB/PxpA family. In terms of assembly, forms a complex composed of PxpA, PxpB and PxpC.

The catalysed reaction is 5-oxo-L-proline + ATP + 2 H2O = L-glutamate + ADP + phosphate + H(+). Its function is as follows. Catalyzes the cleavage of 5-oxoproline to form L-glutamate coupled to the hydrolysis of ATP to ADP and inorganic phosphate. This chain is 5-oxoprolinase subunit A, found in Cupriavidus necator (strain ATCC 17699 / DSM 428 / KCTC 22496 / NCIMB 10442 / H16 / Stanier 337) (Ralstonia eutropha).